The following is a 166-amino-acid chain: Cofilin-2 (166 aa).

At alanine 2 the chain carries N-acetylalanine. The residue at position 3 (serine 3) is a Phosphoserine. In terms of domain architecture, ADF-H spans 4–153 (GVTVNDEVIK…KDRSTLGEKL (150 aa)). Phosphothreonine is present on threonine 6. The Nuclear localization signal motif lies at 30–34 (KKRKK).

It belongs to the actin-binding proteins ADF family. As to quaternary structure, interacts with CSRP3; possibly two molecules of CFL2 can interact with one molecule if CSRP3. In terms of processing, the phosphorylation of Ser-24 may prevent recognition of the nuclear localization signal. In terms of tissue distribution, predominantly expressed in skeletal muscle.

The protein resides in the nucleus matrix. It localises to the cytoplasm. Its subcellular location is the cytoskeleton. Its function is as follows. Controls reversibly actin polymerization and depolymerization in a pH-sensitive manner. It has the ability to bind G- and F-actin in a 1:1 ratio of cofilin to actin. It is the major component of intranuclear and cytoplasmic actin rods. Required for muscle maintenance. May play a role during the exchange of alpha-actin forms during the early postnatal remodeling of the sarcomere. This Mus musculus (Mouse) protein is Cofilin-2 (Cfl2).